Consider the following 329-residue polypeptide: GTP 3',8-cyclase (329 aa).

In terms of domain architecture, Radical SAM core spans 1-229 (MNQIDYLRIS…EGQVRGNGPA (229 aa)). Arg-8 is a GTP binding site. [4Fe-4S] cluster-binding residues include Cys-15 and Cys-19. Residue Tyr-21 participates in S-adenosyl-L-methionine binding. Cys-22 contributes to the [4Fe-4S] cluster binding site. Arg-60 contributes to the GTP binding site. S-adenosyl-L-methionine is bound at residue Gly-64. Thr-91 is a binding site for GTP. Ser-115 provides a ligand contact to S-adenosyl-L-methionine. Lys-155 contacts GTP. Met-189 lines the S-adenosyl-L-methionine pocket. Cys-252 and Cys-255 together coordinate [4Fe-4S] cluster. Position 257–259 (257–259 (RLR)) interacts with GTP. Cys-269 contacts [4Fe-4S] cluster.

It belongs to the radical SAM superfamily. MoaA family. Monomer and homodimer. [4Fe-4S] cluster serves as cofactor.

The catalysed reaction is GTP + AH2 + S-adenosyl-L-methionine = (8S)-3',8-cyclo-7,8-dihydroguanosine 5'-triphosphate + 5'-deoxyadenosine + L-methionine + A + H(+). The protein operates within cofactor biosynthesis; molybdopterin biosynthesis. Functionally, catalyzes the cyclization of GTP to (8S)-3',8-cyclo-7,8-dihydroguanosine 5'-triphosphate. In Microcystis aeruginosa (strain NIES-843 / IAM M-2473), this protein is GTP 3',8-cyclase.